Consider the following 91-residue polypeptide: Parbolysin P6 (91 aa).

Intrachain disulfides connect Cys16/Cys37, Cys22/Cys33, and Cys47/Cys60.

This sequence belongs to the worm cytolysin family. In terms of tissue distribution, localized within the skin and proboscis and are most readily isolated from body mucus secretions.

Its subcellular location is the secreted. Cytolysin that shows hemolytic activity (on bovine erythrocytes, HC(50)=5.75 mg/ml). This hemolytic activity is completely inhibited by small unilamelar vesicles composed of PC/PG, PC/PI and PC/PS in 1:1 molar ratios (with at least 100 mg/ml concentration). This is Parbolysin P6 from Parborlasia corrugatus (Antarctic nemertean worm).